A 435-amino-acid polypeptide reads, in one-letter code: Adenylosuccinate synthetase (435 aa).

GTP contacts are provided by residues 19 to 25 (GDEGKGK) and 49 to 51 (GHT). The active-site Proton acceptor is the Asp-20. 2 residues coordinate Mg(2+): Asp-20 and Gly-49. Residues 20 to 23 (DEGK), 47 to 50 (NAGH), Thr-139, Arg-153, Asn-233, Thr-248, and Arg-312 each bind IMP. His-50 serves as the catalytic Proton donor. A substrate-binding site is contributed by 308–314 (VTTGRKR). GTP-binding positions include Arg-314, 340–342 (KLD), and 422–424 (GVG).

Belongs to the adenylosuccinate synthetase family. In terms of assembly, homodimer. Mg(2+) serves as cofactor.

The protein resides in the cytoplasm. The catalysed reaction is IMP + L-aspartate + GTP = N(6)-(1,2-dicarboxyethyl)-AMP + GDP + phosphate + 2 H(+). It participates in purine metabolism; AMP biosynthesis via de novo pathway; AMP from IMP: step 1/2. Its function is as follows. Plays an important role in the de novo pathway and in the salvage pathway of purine nucleotide biosynthesis. Catalyzes the first committed step in the biosynthesis of AMP from IMP. This is Adenylosuccinate synthetase from Brugia malayi (Filarial nematode worm).